The following is a 376-amino-acid chain: Chaperone protein DnaJ (376 aa).

Residues 5 to 70 (DYYEVLGVGR…DKKAAYDQFG (66 aa)) enclose the J domain. The CR-type zinc finger occupies 132–210 (GLTKELRIPT…CHGEGRVEKS (79 aa)). Zn(2+)-binding residues include cysteine 145, cysteine 148, cysteine 162, cysteine 165, cysteine 184, cysteine 187, cysteine 198, and cysteine 201. 4 CXXCXGXG motif repeats span residues 145 to 152 (CDSCDGSG), 162 to 169 (CGTCHGQG), 184 to 191 (CPTCHGRG), and 198 to 205 (CNKCHGEG).

Belongs to the DnaJ family. Homodimer. Zn(2+) is required as a cofactor.

Its subcellular location is the cytoplasm. Functionally, participates actively in the response to hyperosmotic and heat shock by preventing the aggregation of stress-denatured proteins and by disaggregating proteins, also in an autonomous, DnaK-independent fashion. Unfolded proteins bind initially to DnaJ; upon interaction with the DnaJ-bound protein, DnaK hydrolyzes its bound ATP, resulting in the formation of a stable complex. GrpE releases ADP from DnaK; ATP binding to DnaK triggers the release of the substrate protein, thus completing the reaction cycle. Several rounds of ATP-dependent interactions between DnaJ, DnaK and GrpE are required for fully efficient folding. Also involved, together with DnaK and GrpE, in the DNA replication of plasmids through activation of initiation proteins. This is Chaperone protein DnaJ from Shewanella pealeana (strain ATCC 700345 / ANG-SQ1).